The sequence spans 428 residues: GTPase Obg (428 aa).

An Obg domain is found at 1 to 158; it reads MFVDQVKIYV…RYVTLELKLL (158 aa). The OBG-type G domain maps to 159–329; it reads ADVGLVGFPS…LLFAIADLLE (171 aa). GTP contacts are provided by residues 165–172, 190–194, 212–215, 282–285, and 310–312; these read GFPSVGKS, FTTIV, DLPG, NKMD, and SAV. Residues serine 172 and threonine 192 each coordinate Mg(2+). In terms of domain architecture, OCT spans 350 to 428; sequence KLEKEEAPFH…LLNYEFEFVD (79 aa).

This sequence belongs to the TRAFAC class OBG-HflX-like GTPase superfamily. OBG GTPase family. Monomer. It depends on Mg(2+) as a cofactor.

The protein localises to the cytoplasm. An essential GTPase which binds GTP, GDP and possibly (p)ppGpp with moderate affinity, with high nucleotide exchange rates and a fairly low GTP hydrolysis rate. Plays a role in control of the cell cycle, stress response, ribosome biogenesis and in those bacteria that undergo differentiation, in morphogenesis control. The protein is GTPase Obg of Anoxybacillus flavithermus (strain DSM 21510 / WK1).